We begin with the raw amino-acid sequence, 134 residues long: MSSNAKWLNKVKWDEHGLVPVIAQEVGSNDVLMFAWMNRDALAKTIESGEAIYWSRSRKKLWHKGEESGHTQKVHEVRLDCDEDVVLLKVEQVGAIACHTGRHSCFFQKFEGDAKEGDWETVEPVLKNPETIYK.

Mg(2+) is bound at residue Asp80. Cys81 contributes to the Zn(2+) binding site. Residues Asp82 and Asp84 each coordinate Mg(2+). Cys98 and Cys105 together coordinate Zn(2+).

This sequence belongs to the PRA-CH family. As to quaternary structure, homodimer. The cofactor is Mg(2+). Zn(2+) serves as cofactor.

It localises to the cytoplasm. It carries out the reaction 1-(5-phospho-beta-D-ribosyl)-5'-AMP + H2O = 1-(5-phospho-beta-D-ribosyl)-5-[(5-phospho-beta-D-ribosylamino)methylideneamino]imidazole-4-carboxamide. The protein operates within amino-acid biosynthesis; L-histidine biosynthesis; L-histidine from 5-phospho-alpha-D-ribose 1-diphosphate: step 3/9. In terms of biological role, catalyzes the hydrolysis of the adenine ring of phosphoribosyl-AMP. This Herminiimonas arsenicoxydans protein is Phosphoribosyl-AMP cyclohydrolase.